A 433-amino-acid polypeptide reads, in one-letter code: Glutamate-1-semialdehyde 2,1-aminomutase (433 aa).

N6-(pyridoxal phosphate)lysine is present on K271.

This sequence belongs to the class-III pyridoxal-phosphate-dependent aminotransferase family. HemL subfamily. In terms of assembly, homodimer. The cofactor is pyridoxal 5'-phosphate.

The protein resides in the cytoplasm. The enzyme catalyses (S)-4-amino-5-oxopentanoate = 5-aminolevulinate. The protein operates within porphyrin-containing compound metabolism; protoporphyrin-IX biosynthesis; 5-aminolevulinate from L-glutamyl-tRNA(Glu): step 2/2. Its pathway is porphyrin-containing compound metabolism; chlorophyll biosynthesis. The chain is Glutamate-1-semialdehyde 2,1-aminomutase from Prochlorococcus marinus (strain MIT 9215).